We begin with the raw amino-acid sequence, 766 residues long: Alpha-onocerin synthase LCD (766 aa).

PFTB repeat units lie at residues 101–143 (LCRA…GALD), 151–192 (QREI…RLMG), 456–507 (QESY…STTD), 517–558 (IHEC…PGYK), 594–634 (IQEG…LASG), 643–684 (IQRA…HVVH), and 705–752 (LHRA…WALG). Asp-488 acts as the Proton donor in catalysis.

The protein belongs to the terpene cyclase/mutase family.

The catalysed reaction is pre-alpha-onocerin = alpha-onocerin. It functions in the pathway secondary metabolite biosynthesis; terpenoid biosynthesis. In terms of biological role, oxidosqualene cyclase involved in the biosynthesis of alpha-onocerin, a triterpenoid characterized by a symmetrical structure due to cyclizations at both termini of dioxidosqualene that inhibits acetylcholinesterase. Catalyzes the second half of the cyclization, exclusively from pre-alpha-onocerin. The chain is Alpha-onocerin synthase LCD from Lycopodium clavatum (Stag's-horn clubmoss).